An 872-amino-acid polypeptide reads, in one-letter code: Leucine--tRNA ligase (872 aa).

The 'HIGH' region signature appears at 42-52 (PYPSGNLHMGH). Residues 631-635 (KMSKS) carry the 'KMSKS' region motif. Lys-634 provides a ligand contact to ATP.

The protein belongs to the class-I aminoacyl-tRNA synthetase family.

It is found in the cytoplasm. The enzyme catalyses tRNA(Leu) + L-leucine + ATP = L-leucyl-tRNA(Leu) + AMP + diphosphate. The sequence is that of Leucine--tRNA ligase from Blochmanniella pennsylvanica (strain BPEN).